The sequence spans 597 residues: Sodium/mannose cotransporter SLC5A10 (597 aa).

Over 1 to 16 the chain is Extracellular; that stretch reads MVADNSTSDPHAPGPQ. A glycan (N-linked (GlcNAc...) asparagine) is linked at Asn5. A helical transmembrane segment spans residues 17–37; the sequence is LSVTDIVVITVYFALNVAVGI. At 38-73 the chain is on the cytoplasmic side; sequence WSSCRASRNTVSGYFLAGRDMTWWPIGASLFGSSEG. Ser49 bears the Phosphoserine mark. A helical transmembrane segment spans residues 74–94; that stretch reads SGLFIGLAGSGAAGGLAVAGF. The Extracellular segment spans residues 95 to 100; that stretch reads DWNATY. The helical transmembrane segment at 101 to 121 threads the bilayer; sequence VLLALAWVFGAIYISSEIVTL. Residues 122–137 lie on the Cytoplasmic side of the membrane; sequence AEYIQKRFGGQRIRMY. The helical transmembrane segment at 138–158 threads the bilayer; it reads LSVLSLLLSVFTKISLDLYAG. At 159 to 171 the chain is on the extracellular side; it reads ALFVHICLGWNFY. The chain crosses the membrane as a helical span at residues 172-194; it reads LSTILTLTITALYTITGGLVAVI. Topologically, residues 195-200 are cytoplasmic; sequence YTDALQ. A helical transmembrane segment spans residues 201–219; that stretch reads TLIMVVGAVILAIKAFHQI. At 220–265 the chain is on the extracellular side; sequence DGYGQMEAAYARAIPSRTVANTTCHLPRADAMHMFRDPYTGDLPWT. The helical transmembrane segment at 266–286 threads the bilayer; the sequence is GMTFGLTIMATWYWCTDQVIV. The Cytoplasmic segment spans residues 287-301; the sequence is QRSLSARNLNHAKAG. Residues 302 to 322 form a helical membrane-spanning segment; it reads SILASYLKMLPMGLMIMPGMI. Over 323–367 the chain is Extracellular; the sequence is SRALFPDEVGCVVPSECLRACGAEIGCSNIAYPKLVMELMPVGLR. A helical transmembrane segment spans residues 368–390; sequence GLMIAVMMPALMSSLSSIFNSSS. Topologically, residues 391–410 are cytoplasmic; sequence TLFTMDIWRRLRPCASEREL. A helical membrane pass occupies residues 411 to 431; sequence LLVGRLVIVVLIGVSVAWIPV. Residues 432-444 are Extracellular-facing; that stretch reads LQGSNGGQLFIYM. Residues 445–465 form a helical membrane-spanning segment; the sequence is QSVTSSLAPPVTAVFTLGIFW. At 466–472 the chain is on the cytoplasmic side; it reads QRANEQG. Residues 473 to 493 form a helical membrane-spanning segment; it reads AFWGLLAGLAVGATRLVLEFL. Topologically, residues 494 to 514 are extracellular; the sequence is HPAPPCGAADTRPAVLSQLHY. Residues 515–535 form a helical membrane-spanning segment; sequence LHFAVALFVLTGAVAVGGSLL. Topologically, residues 536–576 are cytoplasmic; sequence TPPPRRHQIENLTWWTLTRDLSLGAKAGDGQTPQRYTFWAR. A helical transmembrane segment spans residues 577–597; sequence VCGFNAILLMCVNIFFYAYFA.

This sequence belongs to the sodium:solute symporter (SSF) (TC 2.A.21) family. In terms of tissue distribution, expressed only in kidney.

The protein localises to the apical cell membrane. It carries out the reaction D-mannose(out) + Na(+)(out) = D-mannose(in) + Na(+)(in). The catalysed reaction is D-fructopyranose(out) + Na(+)(out) = D-fructopyranose(in) + Na(+)(in). Its function is as follows. Electrogenic Na+-coupled sugar symporter that actively transports D-mannose or D-fructose at the plasma membrane, with a Na+ to sugar coupling ratio of 1:1. Transporter activity is driven by a transmembrane Na+ electrochemical gradient set by the Na+/K+ pump. Exclusively recognizes sugar substrates having a pyranose ring with an axial hydroxyl group on carbon 2. Has likely evolved to enable renal reabsorption of D-mannose, an important constituent of oligosaccharide chains of glycoproteins. Contributes to dietary D-fructose reabsorption from glomerular filtrate across the brush border of the kidney. The protein is Sodium/mannose cotransporter SLC5A10 (SLC5A10) of Oryctolagus cuniculus (Rabbit).